A 211-amino-acid chain; its full sequence is FMN-dependent NADH:quinone oxidoreductase (211 aa).

Residues 17–19 and 99–102 each bind FMN; these read SYS and MWNF.

Belongs to the azoreductase type 1 family. As to quaternary structure, homodimer. FMN is required as a cofactor.

The catalysed reaction is 2 a quinone + NADH + H(+) = 2 a 1,4-benzosemiquinone + NAD(+). It catalyses the reaction N,N-dimethyl-1,4-phenylenediamine + anthranilate + 2 NAD(+) = 2-(4-dimethylaminophenyl)diazenylbenzoate + 2 NADH + 2 H(+). Quinone reductase that provides resistance to thiol-specific stress caused by electrophilic quinones. Functionally, also exhibits azoreductase activity. Catalyzes the reductive cleavage of the azo bond in aromatic azo compounds to the corresponding amines. The polypeptide is FMN-dependent NADH:quinone oxidoreductase (Exiguobacterium sp. (strain ATCC BAA-1283 / AT1b)).